The chain runs to 132 residues: Interleukin-13 (132 aa).

The first 18 residues, 1-18, serve as a signal peptide directing secretion; the sequence is MALLLTAVIVLICFGGLT. 4 N-linked (GlcNAc...) asparagine glycosylation sites follow: asparagine 38, asparagine 49, asparagine 57, and asparagine 75. Disulfide bonds link cysteine 48–cysteine 76 and cysteine 64–cysteine 90.

Belongs to the IL-4/IL-13 family. Interacts with IL13RA2.

It is found in the secreted. Cytokine that plays important roles in allergic inflammation and immune response to parasite infection. Synergizes with IL2 in regulating interferon-gamma synthesis. Stimulates B-cell proliferation, and activation of eosinophils, basophils, and mast cells. Plays an important role in controlling IL33 activity by modulating the production of transmembrane and soluble forms of interleukin-1 receptor-like 1/IL1RL1. Displays the capacity to antagonize Th1-driven proinflammatory immune response and downregulates synthesis of many proinflammatory cytokines including IL1, IL6, IL10, IL12 and TNF-alpha through a mechanism that partially involves suppression of NF-kappa-B. Also functions on nonhematopoietic cells, including endothelial cells where it induces vascular cell adhesion protein 1/VCAM1, which is important in the recruitment of eosinophils. Exerts its biological effects through its receptors which comprises the IL4R chain and the IL13RA1 chain, to activate JAK1 and TYK2, leading to the activation of STAT6. Aside from IL13RA1, another receptor IL13RA2 acts as a high affinity decoy for IL13 and mediates internalization and depletion of extracellular IL13. This is Interleukin-13 (IL13) from Bos taurus (Bovine).